A 466-amino-acid polypeptide reads, in one-letter code: Methylenetetrahydrofolate--tRNA-(uracil-5-)-methyltransferase TrmFO (466 aa).

An FAD-binding site is contributed by 14-19 (GGGLAG).

Belongs to the MnmG family. TrmFO subfamily. Requires FAD as cofactor.

The protein localises to the cytoplasm. The enzyme catalyses uridine(54) in tRNA + (6R)-5,10-methylene-5,6,7,8-tetrahydrofolate + NADH + H(+) = 5-methyluridine(54) in tRNA + (6S)-5,6,7,8-tetrahydrofolate + NAD(+). It carries out the reaction uridine(54) in tRNA + (6R)-5,10-methylene-5,6,7,8-tetrahydrofolate + NADPH + H(+) = 5-methyluridine(54) in tRNA + (6S)-5,6,7,8-tetrahydrofolate + NADP(+). Its function is as follows. Catalyzes the folate-dependent formation of 5-methyl-uridine at position 54 (M-5-U54) in all tRNAs. This chain is Methylenetetrahydrofolate--tRNA-(uracil-5-)-methyltransferase TrmFO, found in Brucella canis (strain ATCC 23365 / NCTC 10854 / RM-666).